The primary structure comprises 247 residues: Probable transcriptional regulatory protein Hhal_2210 (247 aa).

The protein belongs to the TACO1 family.

It is found in the cytoplasm. The protein is Probable transcriptional regulatory protein Hhal_2210 of Halorhodospira halophila (strain DSM 244 / SL1) (Ectothiorhodospira halophila (strain DSM 244 / SL1)).